The sequence spans 274 residues: PTS system sorbose-specific EIID component (274 aa).

The PTS EIID domain maps to 4–273; the sequence is KKITQGDLVS…GIIGNALGFL (270 aa). Helical transmembrane passes span 61–81, 99–119, 126–146, 186–206, 226–246, and 253–273; these read LVFFNTTPAVCGPVIAVTAAM, IKVGLMGPLAGVGDPLVWGTL, LGASLALSGNILGPLLFFFIF, ILGLFVMGVLVTKWTTINVPL, ILDQLCPGLLALGLTLLMVRL, and PVWLIFALFGLGIIGNALGFL.

Its subcellular location is the cell inner membrane. The phosphoenolpyruvate-dependent sugar phosphotransferase system (PTS), a major carbohydrate active transport system, catalyzes the phosphorylation of incoming sugar substrates concomitant with their translocation across the cell membrane. The enzyme II SorABFM PTS system is involved in sorbose transport. This is PTS system sorbose-specific EIID component from Klebsiella pneumoniae.